We begin with the raw amino-acid sequence, 148 residues long: 3-dehydroquinate dehydratase (148 aa).

Tyr22 functions as the Proton acceptor in the catalytic mechanism. Residues Asn73, His79, and Asp86 each contribute to the substrate site. Catalysis depends on His99, which acts as the Proton donor. Residues 100–101 (LS) and Arg110 contribute to the substrate site.

It belongs to the type-II 3-dehydroquinase family. Homododecamer.

The enzyme catalyses 3-dehydroquinate = 3-dehydroshikimate + H2O. The protein operates within metabolic intermediate biosynthesis; chorismate biosynthesis; chorismate from D-erythrose 4-phosphate and phosphoenolpyruvate: step 3/7. Functionally, catalyzes a trans-dehydration via an enolate intermediate. In Prochlorococcus marinus (strain MIT 9211), this protein is 3-dehydroquinate dehydratase.